The primary structure comprises 209 residues: Ribosomal RNA large subunit methyltransferase E (209 aa).

S-adenosyl-L-methionine is bound by residues Gly-63, Trp-65, Asp-83, Asp-99, and Asp-124. Lys-164 serves as the catalytic Proton acceptor.

Belongs to the class I-like SAM-binding methyltransferase superfamily. RNA methyltransferase RlmE family.

Its subcellular location is the cytoplasm. The enzyme catalyses uridine(2552) in 23S rRNA + S-adenosyl-L-methionine = 2'-O-methyluridine(2552) in 23S rRNA + S-adenosyl-L-homocysteine + H(+). Functionally, specifically methylates the uridine in position 2552 of 23S rRNA at the 2'-O position of the ribose in the fully assembled 50S ribosomal subunit. The chain is Ribosomal RNA large subunit methyltransferase E from Aeromonas hydrophila subsp. hydrophila (strain ATCC 7966 / DSM 30187 / BCRC 13018 / CCUG 14551 / JCM 1027 / KCTC 2358 / NCIMB 9240 / NCTC 8049).